The chain runs to 301 residues: UBX domain-containing protein 2 (301 aa).

Positions 1-61 are disordered; it reads MSRNIRTFRD…AARGPDSEAH (61 aa). In terms of domain architecture, SEP spans 89 to 153; that stretch reads TISLTLHLWS…KVNRHHEEYV (65 aa). The disordered stretch occupies residues 176–200; that stretch reads GQSSSSATTAGTSSATTDHNPDHTA. Low complexity predominate over residues 178–192; that stretch reads SSSSATTAGTSSATT. Residues 218–295 enclose the UBX domain; that stretch reads MNEPTTNIQI…NVLNSVVAVK (78 aa).

This sequence belongs to the NSFL1C family. In terms of assembly, interacts with cdc-48.1 (via N-terminus) and cdc-48.2 (via N-terminus). Interacts with kinase air-1. In terms of tissue distribution, expressed in the germline (at protein level). Expressed in spermatocytes but not in mature sperm (at protein level). Ubiquitously expressed. Predominantly expressed in the spermatheca.

It localises to the cytoplasm. The protein localises to the perinuclear region. It is found in the nucleus. The protein resides in the cytoskeleton. Its subcellular location is the microtubule organizing center. It localises to the centrosome. Its function is as follows. Ubiquitin-binding protein which acts as an adapter for ATPase cdc-48.1 and/or cdc-48.2, conferring substrate specificity. Together with ubxn-2 and ubxn-3, plays a role in hermaphrodite spermatogenesis probably by promoting the degradation of sex determination terminal factor tra-1. Probably in association with ATPase cdc-48.1 or/and cdc-48.2, regulates the centrosomal levels of kinase air-1 levels during mitotic progression by promoting air-1 removal from centrosomes in prophase. Also, regulates spindle orientation in the one-cell embryo by controlling centration and rotation of the pronuclei-centrosome complex in prophase. The protein is UBX domain-containing protein 2 of Caenorhabditis elegans.